The chain runs to 444 residues: C4-dicarboxylate transport protein (444 aa).

Helical transmembrane passes span 7–29, 44–66, 79–101, 143–165, 186–208, 221–243, 291–313, and 353–375; these read LYKS…GHFY, IKLI…IAGM, ALLY…VNVV, IVGA…FGFA, VMFN…AMAF, LGQL…LGAI, VVGL…YLTM, and FIVL…ALIL. The segment at 418–444 is disordered; the sequence is SGGRAISDTREEDDLGVAEGPTPTTVK.

It belongs to the dicarboxylate/amino acid:cation symporter (DAACS) (TC 2.A.23) family.

It is found in the cell inner membrane. Functionally, responsible for the transport of dicarboxylates such as succinate, fumarate, and malate from the periplasm across the inner membrane. The polypeptide is C4-dicarboxylate transport protein (Pseudomonas chlororaphis (Pseudomonas aureofaciens)).